A 357-amino-acid chain; its full sequence is Major outer membrane protein P.IB (357 aa).

The N-terminal stretch at 1 to 19 is a signal peptide; that stretch reads MKKSLIALTLAALPVAAMA.

The protein belongs to the Gram-negative porin family. Homotrimer.

It is found in the cell outer membrane. Its function is as follows. Serves as a slightly cation selective porin. In Neisseria sicca, this protein is Major outer membrane protein P.IB (por).